We begin with the raw amino-acid sequence, 308 residues long: Putative mitochondrial transporter UCP3 (308 aa).

Over 1–10 (MVGLQPSEVP) the chain is Mitochondrial intermembrane. A helical membrane pass occupies residues 11 to 32 (PTTVVKFLGAGTAACFADLLTF). Solcar repeat units lie at residues 11–102 (PTTV…VKQF), 111–202 (SSVA…IKEK), and 211–296 (DNFP…LKRA). Residues 33–73 (PLDTAKVRLQIQGENPGVQSVQYRGVLGTILTMVRTEGPRS) are Mitochondrial matrix-facing. The chain crosses the membrane as a helical span at residues 74 to 96 (PYSGLVAGLHRQMSFASIRIGLY). Over 97 to 116 (DSVKQFYTPKGTDHSSVAIR) the chain is Mitochondrial intermembrane. A helical membrane pass occupies residues 117-133 (ILAGCTTGAMAVTCAQP). The Mitochondrial matrix segment spans residues 134–179 (TDVVKVRFQAMIRLGTGGERKYRGTMDAYRTIAREEGVRGLWKGTW). Residues 180-196 (PNITRNAIVNCAEMVTY) form a helical membrane-spanning segment. Residues 197–213 (DIIKEKLLDSHLFTDNF) lie on the Mitochondrial intermembrane side of the membrane. Residues 214–233 (PCHFVSAFGAGFCATVVASP) traverse the membrane as a helical segment. At 234-267 (VDVVKTRYMNAPPGRYRSPLHCMLRMVAQEGPTA) the chain is on the mitochondrial matrix side. Residues 268–290 (FYKGFMPSFLRLGSWNVMMFVTY) form a helical membrane-spanning segment. Residues 275–297 (SFLRLGSWNVMMFVTYEQLKRAL) form a purine nucleotide binding region. Over 291–308 (EQLKRALMKVQVLRESPF) the chain is Mitochondrial intermembrane.

The protein belongs to the mitochondrial carrier (TC 2.A.29) family. Interacts with HAX1; the interaction is direct and calcium-dependent.

Its subcellular location is the mitochondrion inner membrane. Its function is as follows. Putative transmembrane transporter that plays a role in mitochondrial metabolism via an as yet unclear mechanism. Originally, this mitochondrial protein was thought to act as a proton transmembrane transporter from the mitochondrial intermembrane space into the matrix, causing proton leaks through the inner mitochondrial membrane, thereby uncoupling mitochondrial membrane potential generation from ATP synthesis. However, this function is controversial and uncoupling may not be the function, or at least not the main function, but rather a consequence of more conventional metabolite transporter activity. This Rattus norvegicus (Rat) protein is Putative mitochondrial transporter UCP3.